The primary structure comprises 161 residues: Nucleotide-binding protein swp_1151 (161 aa).

This sequence belongs to the YajQ family.

Its function is as follows. Nucleotide-binding protein. This chain is Nucleotide-binding protein swp_1151, found in Shewanella piezotolerans (strain WP3 / JCM 13877).